We begin with the raw amino-acid sequence, 117 residues long: Protein OPG035 (117 aa).

Belongs to the poxviridae OPG035 family.

Bcl-2-like protein which contributes to virulence by preventing host NF-kappa-B activation in response to pro-inflammatory stimuli such as TNF-alpha or IL1B. This is Protein OPG035 (OPG035) from Bos taurus (Bovine).